The following is a 408-amino-acid chain: MSWDQVWIDVNLATMDPSISAPYGAITNAAIAVKDGKIAWLGPRSELPAFDVLSIPVYRGKGGWITPGLIDAHTHLIFAGNRANEFELRLQGASYEEIARSGGGIISTVKACREADEAELFELGRQRLNALAKEGVTTVEIKSGYGLDTETELKILRVARELGKHHHVDVKTTFLGAHAIPPEYKDNSDGYVDLIINKMLPAVIAENLADAVDVFCENIAFNLEQTERVLSAAKAAGLEIKLHAEQLTNMGGSALAARLGAKSVDHIEYLDEAGVKALSESGTCAVLLPGAFYFLRETQKPPVDLLRQYGVPMVLASDFNPGSSPICSTLLMLNMGCTLFRLTPEEALTGLTLNAAKALGIEDNVGSLVVGKQADFCLWDIVTPAQLAYSYGVNPCKDVVKNGKLVHQ.

2 residues coordinate Fe(3+): histidine 73 and histidine 75. The Zn(2+) site is built by histidine 73 and histidine 75. Residues arginine 82, tyrosine 145, and histidine 178 each coordinate 4-imidazolone-5-propanoate. An N-formimidoyl-L-glutamate-binding site is contributed by tyrosine 145. Histidine 243 lines the Fe(3+) pocket. Histidine 243 is a Zn(2+) binding site. 4-imidazolone-5-propanoate is bound at residue glutamine 246. Aspartate 318 contributes to the Fe(3+) binding site. Aspartate 318 lines the Zn(2+) pocket. Residues asparagine 320 and glycine 322 each coordinate N-formimidoyl-L-glutamate. Serine 323 provides a ligand contact to 4-imidazolone-5-propanoate.

The protein belongs to the metallo-dependent hydrolases superfamily. HutI family. It depends on Zn(2+) as a cofactor. Fe(3+) serves as cofactor.

Its subcellular location is the cytoplasm. The catalysed reaction is 4-imidazolone-5-propanoate + H2O = N-formimidoyl-L-glutamate. Its pathway is amino-acid degradation; L-histidine degradation into L-glutamate; N-formimidoyl-L-glutamate from L-histidine: step 3/3. Catalyzes the hydrolytic cleavage of the carbon-nitrogen bond in imidazolone-5-propanoate to yield N-formimidoyl-L-glutamate. It is the third step in the universal histidine degradation pathway. The polypeptide is Imidazolonepropionase (Shewanella baltica (strain OS155 / ATCC BAA-1091)).